A 347-amino-acid polypeptide reads, in one-letter code: Protein RecA (347 aa).

Gly67–Thr74 lines the ATP pocket.

This sequence belongs to the RecA family. Post-translationally, the protein migrates as a 40 kDa protein in strains 69A and NCTC 11637. When overexpressed in E.coli a 38 kDa protein is made which is unable to complement the E.coli deletion mutant. It has been suggested this size difference is due to a post-translational modification.

Its subcellular location is the cytoplasm. Its function is as follows. Can catalyze the hydrolysis of ATP in the presence of single-stranded DNA, the ATP-dependent uptake of single-stranded DNA by duplex DNA, and the ATP-dependent hybridization of homologous single-stranded DNAs. It interacts with LexA causing its activation and leading to its autocatalytic cleavage. Deletion of this gene leads to the inability of the bacteria to perform homologous recombination, and markedly increases UV sensitivity. The sequence is that of Protein RecA from Helicobacter pylori (strain ATCC 700392 / 26695) (Campylobacter pylori).